The primary structure comprises 350 residues: Glucose-6-phosphate 3-dehydrogenase (350 aa).

The protein belongs to the Gfo/Idh/MocA family.

It catalyses the reaction D-glucose 6-phosphate + NAD(+) = 3-dehydro-D-glucose 6-phosphate + NADH + H(+). It functions in the pathway antibiotic biosynthesis; kanosamine biosynthesis. In terms of biological role, involved in the biosynthesis of kanosamine (3-amino-3-deoxy-D-glucose), which is known to have antibiotic and antifungal properties, and to be a precursor of the antibiotic neotrehalosadiamine (3,3'-diamino-3,3'-dideoxy-alpha,beta-trehalose (NTD)). Catalyzes the oxidation of glucose 6-phosphate to 3-oxo-D-glucose 6-phosphate. It can only use NAD. The chain is Glucose-6-phosphate 3-dehydrogenase (ntdC) from Bacillus subtilis (strain 168).